The chain runs to 67 residues: Small ribosomal subunit protein bS21 (67 aa).

This sequence belongs to the bacterial ribosomal protein bS21 family.

The polypeptide is Small ribosomal subunit protein bS21 (Paramagnetospirillum magneticum (strain ATCC 700264 / AMB-1) (Magnetospirillum magneticum)).